Consider the following 305-residue polypeptide: ATP-dependent Clp protease proteolytic subunit-related protein 4, chloroplastic (305 aa).

The transit peptide at 1 to 68 (MEVAAATATS…SSDLCGAKLR (68 aa)) directs the protein to the chloroplast.

Belongs to the peptidase S14 family. In terms of assembly, component of the chloroplastic Clp protease core complex which consist of at least 16 proteins: CLPP4 (3 copies), CLPP5 (3 copies), CLPR4 (2 copies), ClpP1 (1 copy), CLPP6 (1 copy), CLPR2 (1 copy), CLPT1 (1 copy), CLPT2 (1 copy) and 3 copies of CLPP3 and/or CLPR1 and/or CLPR3. The core complex is organized in two heptameric rings, one containing CLPP3,4,5,6 in a 1:2:3:1 ratio and the other CLPP1 and CLPR1,2,3,4 in a 3:1:1:1:1 ratio.

The protein localises to the plastid. Its subcellular location is the chloroplast. Functionally, involved in plastid protein homeostasis. This chain is ATP-dependent Clp protease proteolytic subunit-related protein 4, chloroplastic, found in Arabidopsis thaliana (Mouse-ear cress).